Reading from the N-terminus, the 466-residue chain is Argininosuccinate lyase (466 aa).

It belongs to the lyase 1 family. Argininosuccinate lyase subfamily.

It localises to the cytoplasm. The catalysed reaction is 2-(N(omega)-L-arginino)succinate = fumarate + L-arginine. It functions in the pathway amino-acid biosynthesis; L-arginine biosynthesis; L-arginine from L-ornithine and carbamoyl phosphate: step 3/3. This is Argininosuccinate lyase from Clostridium perfringens (strain ATCC 13124 / DSM 756 / JCM 1290 / NCIMB 6125 / NCTC 8237 / Type A).